Consider the following 396-residue polypeptide: Nitrate regulatory protein (396 aa).

The NIT domain maps to 37–284 (GQISALVHML…VDLLNAADAL (248 aa)). Positions 323 to 384 (LQQLSGQLAS…RMVEIARALL (62 aa)) constitute an ANTAR domain.

In terms of biological role, nitrate- and nitrite-responsive positive regulator for nasFEDCBA operon expression. NasR protein binds to the factor-independent terminator site located in the nasF operon leader RNA to effect transcription antitermination. This is Nitrate regulatory protein (nasR) from Klebsiella oxytoca.